A 305-amino-acid chain; its full sequence is UPF0282 protein Tneu_0934 (305 aa).

The protein belongs to the UPF0282 family.

The polypeptide is UPF0282 protein Tneu_0934 (Pyrobaculum neutrophilum (strain DSM 2338 / JCM 9278 / NBRC 100436 / V24Sta) (Thermoproteus neutrophilus)).